Reading from the N-terminus, the 306-residue chain is Glutaminase (306 aa).

7 residues coordinate substrate: S66, N116, E159, N166, Y190, Y242, and V260.

This sequence belongs to the glutaminase family. Homotetramer.

It carries out the reaction L-glutamine + H2O = L-glutamate + NH4(+). This Caulobacter vibrioides (strain ATCC 19089 / CIP 103742 / CB 15) (Caulobacter crescentus) protein is Glutaminase.